Here is a 622-residue protein sequence, read N- to C-terminus: Chaperone protein HscA homolog (622 aa).

Belongs to the heat shock protein 70 family.

Its function is as follows. Chaperone involved in the maturation of iron-sulfur cluster-containing proteins. Has a low intrinsic ATPase activity which is markedly stimulated by HscB. The sequence is that of Chaperone protein HscA homolog from Acidovorax sp. (strain JS42).